We begin with the raw amino-acid sequence, 71 residues long: MRIHYVLFAFLLVLLSPFAAFSQDINSKRACYREGGECLQRCIGLFHKIGTCNFRFKCCKFQIPEKKTKIL.

Residues 1–22 form the signal peptide; that stretch reads MRIHYVLFAFLLVLLSPFAAFS. At Gln23 the chain carries Pyrrolidone carboxylic acid. A propeptide spanning residues 23 to 25 is cleaved from the precursor; that stretch reads QDI. Intrachain disulfides connect Cys31–Cys58, Cys38–Cys52, and Cys42–Cys59.

Belongs to the beta-defensin family. LAP/TAP subfamily.

It localises to the secreted. Has bactericidal activity. This Mus musculus (Mouse) protein is Beta-defensin 7 (Defb7).